The following is a 1816-amino-acid chain: Kinesin-like protein KIF1B (1816 aa).

S2 carries the post-translational modification N-acetylserine. The Kinesin motor domain maps to 5 to 354 (SVKVAVRVRP…LRYADRAKQI (350 aa)). Position 97-104 (97-104 (GQTGAGKS)) interacts with ATP. The interval 270-350 (NINKSLTTLG…TLSTLRYADR (81 aa)) is interaction with KIFBP. Coiled coils occupy residues 365-386 (NAKLVRELKEEVTRLKDLLRAQ) and 470-502 (GEEAIERLKESEKIIAELNETWEEKLRKTEAIR). Residues 556–612 (TRVGQADAERRQDIVLSGAHIKEEHCLFRSERSNTGEVIVTLEPCERSETYVNGKRV) form the FHA domain. Phosphothreonine is present on residues T647 and T652. Coiled coils occupy residues 668 to 737 (EKQG…EEEV) and 841 to 869 (SLDKLKQRLDLMREMYDRAGEVASSAQDD). S1054, S1057, S1416, S1454, and S1487 each carry phosphoserine. The interval 1522 to 1571 (VPKSLSDSLSPSLSSGTLSTSTSISSQISTTTFESAITPSESSGYDSADV) is disordered. Low complexity predominate over residues 1525 to 1553 (SLSDSLSPSLSSGTLSTSTSISSQISTTT). The segment covering 1554–1566 (FESAITPSESSGY) has biased composition (polar residues). Residues S1573, S1603, S1610, and S1613 each carry the phosphoserine modification. A compositionally biased stretch (low complexity) spans 1620–1637 (SVSSFSSSTLTPSSTCPS). Positions 1620–1659 (SVSSFSSSTLTPSSTCPSLVDSRSSSMDQKTPEANSRASS) are disordered. The segment covering 1640–1659 (DSRSSSMDQKTPEANSRASS) has biased composition (polar residues). The PH domain occupies 1702-1799 (VSKKGYLHFK…WLYAFNPLLA (98 aa)).

This sequence belongs to the TRAFAC class myosin-kinesin ATPase superfamily. Kinesin family. Unc-104 subfamily. Monomer. Interacts with KIFBP; positively regulates KIF1B microtubule motor activity. Interacts (via C-terminus end of the kinesin-motor domain) with CHP1; the interaction occurs in a calcium-dependent manner. As to quaternary structure, interacts with MADD (via death domain); links this isoform to Rab3-carrying vesicles in anterograde synaptic vesicle transport. As to expression, expressed in the brain (at protein level).

It localises to the cytoplasm. The protein localises to the cytoskeleton. Its subcellular location is the cytoplasmic vesicle. It is found in the secretory vesicle. The protein resides in the synaptic vesicle membrane. It localises to the mitochondrion. The enzyme catalyses ATP + H2O + a kinesin associated with a microtubule at position (n) = ADP + phosphate a kinesin associated with a microtubule at position (n+1, toward the plus end).. In terms of biological role, has a plus-end-directed microtubule motor activity and functions as a motor for transport of vesicles and organelles along microtubules. Its function is as follows. Has a plus-end-directed microtubule motor activity and functions as a motor for anterograde synaptic vesicle transport along axonal microtubules from the cell body to the presynapse in neuronal cells. Functions as a downstream effector in a developmental apoptotic pathway that is activated when nerve growth factor (NGF) becomes limiting for neuronal progenitor cells. Functionally, has a plus-end-directed microtubule motor activity and functions as a motor for anterograde transport of mitochondria. This chain is Kinesin-like protein KIF1B, found in Mus musculus (Mouse).